A 323-amino-acid polypeptide reads, in one-letter code: uncharacterized protein (323 aa).

This is an uncharacterized protein from Treponema pallidum (strain Nichols).